We begin with the raw amino-acid sequence, 95 residues long: Ribonuclease P protein component 1 (95 aa).

This sequence belongs to the eukaryotic/archaeal RNase P protein component 1 family. Consists of a catalytic RNA component and at least 4 protein subunits. Forms a subcomplex with Rnp4 which stimulates the catalytic RNA.

It is found in the cytoplasm. It carries out the reaction Endonucleolytic cleavage of RNA, removing 5'-extranucleotides from tRNA precursor.. Functionally, part of ribonuclease P, a protein complex that generates mature tRNA molecules by cleaving their 5'-ends. This Methanocaldococcus jannaschii (strain ATCC 43067 / DSM 2661 / JAL-1 / JCM 10045 / NBRC 100440) (Methanococcus jannaschii) protein is Ribonuclease P protein component 1.